Here is a 308-residue protein sequence, read N- to C-terminus: Aspartate carbamoyltransferase catalytic subunit (308 aa).

Residues arginine 55 and threonine 56 each contribute to the carbamoyl phosphate site. Residue lysine 83 participates in L-aspartate binding. 3 residues coordinate carbamoyl phosphate: arginine 105, histidine 133, and glutamine 136. Arginine 166 and arginine 220 together coordinate L-aspartate. Positions 261 and 262 each coordinate carbamoyl phosphate.

Belongs to the aspartate/ornithine carbamoyltransferase superfamily. ATCase family. In terms of assembly, heterododecamer (2C3:3R2) of six catalytic PyrB chains organized as two trimers (C3), and six regulatory PyrI chains organized as three dimers (R2).

It catalyses the reaction carbamoyl phosphate + L-aspartate = N-carbamoyl-L-aspartate + phosphate + H(+). Its pathway is pyrimidine metabolism; UMP biosynthesis via de novo pathway; (S)-dihydroorotate from bicarbonate: step 2/3. Its function is as follows. Catalyzes the condensation of carbamoyl phosphate and aspartate to form carbamoyl aspartate and inorganic phosphate, the committed step in the de novo pyrimidine nucleotide biosynthesis pathway. The sequence is that of Aspartate carbamoyltransferase catalytic subunit from Chlorobaculum tepidum (strain ATCC 49652 / DSM 12025 / NBRC 103806 / TLS) (Chlorobium tepidum).